The chain runs to 148 residues: Large ribosomal subunit protein uL13 (148 aa).

The protein belongs to the universal ribosomal protein uL13 family. Part of the 50S ribosomal subunit.

In terms of biological role, this protein is one of the early assembly proteins of the 50S ribosomal subunit, although it is not seen to bind rRNA by itself. It is important during the early stages of 50S assembly. The chain is Large ribosomal subunit protein uL13 from Ureaplasma parvum serovar 3 (strain ATCC 27815 / 27 / NCTC 11736).